We begin with the raw amino-acid sequence, 272 residues long: Indole-3-glycerol phosphate synthase (272 aa).

It belongs to the TrpC family.

The enzyme catalyses 1-(2-carboxyphenylamino)-1-deoxy-D-ribulose 5-phosphate + H(+) = (1S,2R)-1-C-(indol-3-yl)glycerol 3-phosphate + CO2 + H2O. The protein operates within amino-acid biosynthesis; L-tryptophan biosynthesis; L-tryptophan from chorismate: step 4/5. This is Indole-3-glycerol phosphate synthase from Arthrobacter sp. (strain FB24).